Here is a 118-residue protein sequence, read N- to C-terminus: T cell receptor gamma variable 5 (118 aa).

A signal peptide spans 1 to 17 (MRWALLVLLAFLSPASQ). Positions 18 to 118 (KSSNLEGGTK…GVYYCATWDR (101 aa)) constitute an Ig-like domain. Cysteines 41 and 113 form a disulfide. N-linked (GlcNAc...) asparagine glycosylation occurs at Asn106.

In terms of assembly, gamma-delta TR is a heterodimer composed of a gamma and delta chain; disulfide-linked. The gamma-delta TR is associated with the transmembrane signaling CD3 coreceptor proteins following the stoichiometry: a single gamma-delta TR heterodimer associates with one CD3D-CD3E heterodimer, one CD3G-CD3E heterodimer and one CD247 homodimer forming a stable octameric structure. Upon activation, gamma-delta TR complex associates with FCER1G to initiate intracellular signaling.

It is found in the cell membrane. V region of the variable domain of T cell receptor (TR) gamma chain that participates in the antigen recognition. Gamma-delta TRs recognize a variety of self and foreign non-peptide antigens frequently expressed at the epithelial boundaries between the host and external environment, including endogenous lipids presented by MH-like protein CD1D and phosphoantigens presented by butyrophilin-like molecule BTN3A1. Upon antigen recognition induces rapid, innate-like immune responses involved in pathogen clearance and tissue repair. Binding of gamma-delta TR complex to antigen triggers phosphorylation of immunoreceptor tyrosine-based activation motifs (ITAMs) in the CD3 chains by the LCK and FYN kinases, allowing the recruitment, phosphorylation, and activation of ZAP70 that facilitates phosphorylation of the scaffolding proteins LCP2 and LAT. This lead to the formation of a supramolecular signalosome that recruits the phospholipase PLCG1, resulting in calcium mobilization and ERK activation, ultimately leading to T cell expansion and differentiation into effector cells. Gamma-delta TRs are produced through somatic rearrangement of a limited repertoire of variable (V), diversity (D), and joining (J) genes. The potential diversity of gamma-delta TRs is conferred by the unique ability to rearrange (D) genes in tandem and to utilize all three reading frames. The combinatorial diversity is considerably increased by the sequence exonuclease trimming and random nucleotide (N) region additions which occur during the V-(D)-J rearrangements. The polypeptide is T cell receptor gamma variable 5 (Homo sapiens (Human)).